An 89-amino-acid chain; its full sequence is Small ribosomal subunit protein uS14A (89 aa).

The protein belongs to the universal ribosomal protein uS14 family. As to quaternary structure, part of the 30S ribosomal subunit. Contacts proteins S3 and S10.

Binds 16S rRNA, required for the assembly of 30S particles and may also be responsible for determining the conformation of the 16S rRNA at the A site. This chain is Small ribosomal subunit protein uS14A, found in Bacillus velezensis (strain DSM 23117 / BGSC 10A6 / LMG 26770 / FZB42) (Bacillus amyloliquefaciens subsp. plantarum).